A 540-amino-acid chain; its full sequence is Peptide chain release factor 3 (540 aa).

A tr-type G domain is found at 14–283 (NQRRNFAIIS…AFLDYALKPI (270 aa)). Residues 23–30 (SHPDAGKT), 91–95 (DTPGH), and 145–148 (NKLD) contribute to the GTP site.

Belongs to the TRAFAC class translation factor GTPase superfamily. Classic translation factor GTPase family. PrfC subfamily.

The protein localises to the cytoplasm. Increases the formation of ribosomal termination complexes and stimulates activities of RF-1 and RF-2. It binds guanine nucleotides and has strong preference for UGA stop codons. It may interact directly with the ribosome. The stimulation of RF-1 and RF-2 is significantly reduced by GTP and GDP, but not by GMP. This Gloeothece citriformis (strain PCC 7424) (Cyanothece sp. (strain PCC 7424)) protein is Peptide chain release factor 3.